The chain runs to 228 residues: Urease accessory protein UreE (228 aa).

The tract at residues 193 to 228 (HGSGLHIHGIHSHGDGHSHSHDDHDHDHNHDHDHKH) is disordered. The segment covering 204–228 (SHGDGHSHSHDDHDHDHNHDHDHKH) has biased composition (basic and acidic residues).

Belongs to the UreE family.

The protein localises to the cytoplasm. Functionally, involved in urease metallocenter assembly. Binds nickel. Probably functions as a nickel donor during metallocenter assembly. The protein is Urease accessory protein UreE of Yersinia rohdei.